Here is a 147-residue protein sequence, read N- to C-terminus: Cytochrome c-type biogenesis protein CcmE (147 aa).

Residues 1–9 lie on the Cytoplasmic side of the membrane; sequence MKSLKKKRR. A helical; Signal-anchor for type II membrane protein membrane pass occupies residues 10–30; sequence IQILVAAAVALVLAVGLIGYG. Topologically, residues 31–147 are periplasmic; that stretch reads FRDGINLYRS…EQGVYQEPNS (117 aa). The heme site is built by histidine 123 and tyrosine 127.

Belongs to the CcmE/CycJ family.

It is found in the cell inner membrane. In terms of biological role, heme chaperone required for the biogenesis of c-type cytochromes. Transiently binds heme delivered by CcmC and transfers the heme to apo-cytochromes in a process facilitated by CcmF and CcmH. The sequence is that of Cytochrome c-type biogenesis protein CcmE from Paracoccus denitrificans (strain Pd 1222).